A 317-amino-acid chain; its full sequence is MVETQMDKLGFLLNHIGKQVTTKVLSNAHITQTMKEIILENHSVDGGAAKNASKGKSSPKEKKHWTEFESWEQLSKSKRSFKEYWTERNEIVNTLLLNWDNVRAAIKKFLNDDREWCGRINMVNGVPEIVEIIPSPYRAGENIYFGSEAMMPAEIYSRVANKPAMFVFHTHPNLGSCCGGMPSICDISTTLRYLLMGWTAGHLIISSNQVGMLTVDKRIIVDLWANENPRWLMAQKILDIFMMLTSRRSLVNPWTLRDLKKILQDYGIEYIIFPSNDFFIYEDARLLMFSKKWTNFFTLHELLNDLETIETKATSST.

This sequence belongs to the asfivirus F317L family.

The protein localises to the virion. This is an uncharacterized protein from African swine fever virus (isolate Tick/South Africa/Pretoriuskop Pr4/1996) (ASFV).